The sequence spans 114 residues: Putative cysteine proteinase inhibitor 9 (114 aa).

The first 23 residues, 1–23 (MRTSSLVLFAAVAVFGAACTAAA), serve as a signal peptide directing secretion.

Belongs to the cystatin family. Phytocystatin subfamily.

It localises to the secreted. In terms of biological role, specific inhibitor of cysteine proteinases. Probably involved in the regulation of endogenous processes and in defense against pests and pathogens. The protein is Putative cysteine proteinase inhibitor 9 of Oryza sativa subsp. japonica (Rice).